A 119-amino-acid polypeptide reads, in one-letter code: Large ribosomal subunit protein uL18 (119 aa).

This sequence belongs to the universal ribosomal protein uL18 family. Part of the 50S ribosomal subunit; part of the 5S rRNA/L5/L18/L25 subcomplex. Contacts the 5S and 23S rRNAs.

Functionally, this is one of the proteins that bind and probably mediate the attachment of the 5S RNA into the large ribosomal subunit, where it forms part of the central protuberance. The chain is Large ribosomal subunit protein uL18 from Oceanobacillus iheyensis (strain DSM 14371 / CIP 107618 / JCM 11309 / KCTC 3954 / HTE831).